Here is a 201-residue protein sequence, read N- to C-terminus: CASP-like protein 1F2 (201 aa).

The Cytoplasmic segment spans residues 1 to 29; that stretch reads MITSIATTTAGAFEVKSLGFIPYPSQPKR. Residues 30-50 form a helical membrane-spanning segment; that stretch reads IFFMAQVIFRILAIAFAVASI. The Extracellular portion of the chain corresponds to 51–78; that stretch reads SAMVTSDQNVIVFGMDTAARYSYSSAFR. The helical transmembrane segment at 79–99 threads the bilayer; that stretch reads FLVGANAVVCGFSVLSLIFVC. Over 100–119 the chain is Cytoplasmic; that stretch reads LMSRRSEAILEKNYYLFLHD. The chain crosses the membrane as a helical span at residues 120 to 140; that stretch reads MVMMVMMVSGCSAATAIGYVG. Topologically, residues 141–162 are extracellular; it reads RYGEKEITWTAVCDFVGKFCNQ. The helical transmembrane segment at 163 to 183 threads the bilayer; sequence ALVSIVLAYLALFCYVALTTL. The Cytoplasmic segment spans residues 184 to 201; it reads AAHKLNHSSSTAAIRQNE.

This sequence belongs to the Casparian strip membrane proteins (CASP) family. Homodimer and heterodimers.

It localises to the cell membrane. The chain is CASP-like protein 1F2 from Ricinus communis (Castor bean).